The chain runs to 314 residues: Homoserine O-acetyltransferase (314 aa).

C142 acts as the Acyl-thioester intermediate in catalysis. Residues K163 and S192 each contribute to the substrate site. H235 acts as the Proton acceptor in catalysis. The active site involves E237. A substrate-binding site is contributed by R249.

Belongs to the MetA family.

The protein resides in the cytoplasm. It carries out the reaction L-homoserine + acetyl-CoA = O-acetyl-L-homoserine + CoA. It functions in the pathway amino-acid biosynthesis; L-methionine biosynthesis via de novo pathway; O-acetyl-L-homoserine from L-homoserine: step 1/1. In terms of biological role, transfers an acetyl group from acetyl-CoA to L-homoserine, forming acetyl-L-homoserine. This Streptococcus pneumoniae (strain JJA) protein is Homoserine O-acetyltransferase.